The chain runs to 273 residues: Transcriptional regulator ICP22 homolog (273 aa).

Disordered regions lie at residues 1–57 and 160–273; these read GSCR…YGLP and YEQR…SARR. Residues 11–33 are compositionally biased toward low complexity; sequence PSTSPIIPSLSPSSGGNPSPRSS. 2 stretches are compositionally biased toward acidic residues: residues 178–194 and 204–224; these read EECEVSGDESPSEEEEA and SPEEESASSDFESFSDEEDDS. Positions 261-273 are enriched in low complexity; that stretch reads VPKGGRPAKSARR.

This sequence belongs to the herpesviridae ICP22 family.

This chain is Transcriptional regulator ICP22 homolog, found in Equus caballus (Horse).